Consider the following 515-residue polypeptide: MVSIPEYYEGKNVLLTGATGFMGKVLLEKLLRSCPKVKAVYVLVRPKAGQTPEARIEEITSCKLFDRLREEQPDFKEKIIVITSELTQPELDLSNPVKEKLIECINIIFHCAATVRFNETLRDAVQLNVLSTKQLLSLAQQMTNLEVFMHVSTAYAYCNRKHIEEVVYPPPVDPKKLMDSLEWMDDSLVNDITPKLIGDRPNTYTYTKALAEYVVQQEGARLNTAIIRPSIVGASWKEPFPGWIDNFNGPSGLFIAAGKGILRTMRASNGAVADLVPVDVVVNMTLAAAWYSGVNRPRNIMVYNCTTGGTNPFHWSEVEYHVISTFKRNPLEQAFRRPNVNLTSNHLLYHYWIAVSHKAPAFLYDIYLRITGRSPRMMKTITRLHKAMVFLEYFTSNSWIWNTENMTMLMNQLSPEDKKTFNFDVRQLHWAEYMENYCMGTKKYVLNEEMSGLPAARKHLNKLRNIRYGFNTILVILIWRIFIARSQMARNIWYFVVSLCYKFLSYFRASSTMRY.

At 1–465 (MVSIPEYYEG…ARKHLNKLRN (465 aa)) the chain is on the cytoplasmic side. The chain crosses the membrane as a helical span at residues 466–483 (IRYGFNTILVILIWRIFI). The Peroxisomal segment spans residues 484 to 515 (ARSQMARNIWYFVVSLCYKFLSYFRASSTMRY).

Belongs to the fatty acyl-CoA reductase family.

It localises to the peroxisome membrane. The enzyme catalyses a long-chain fatty acyl-CoA + 2 NADPH + 2 H(+) = a long-chain primary fatty alcohol + 2 NADP(+) + CoA. It carries out the reaction hexadecanoyl-CoA + 2 NADPH + 2 H(+) = hexadecan-1-ol + 2 NADP(+) + CoA. It catalyses the reaction octadecanoyl-CoA + 2 NADPH + 2 H(+) = octadecan-1-ol + 2 NADP(+) + CoA. The catalysed reaction is (9Z)-octadecenoyl-CoA + 2 NADPH + 2 H(+) = (9Z)-octadecen-1-ol + 2 NADP(+) + CoA. The enzyme catalyses (9Z,12Z)-octadecadienoyl-CoA + 2 NADPH + 2 H(+) = (9Z,12Z)-octadecadien-1-ol + 2 NADP(+) + CoA. It carries out the reaction eicosanoyl-CoA + 2 NADPH + 2 H(+) = eicosan-1-ol + 2 NADP(+) + CoA. It catalyses the reaction 16-methylheptadecanoyl-CoA + 2 NADPH + 2 H(+) = 16-methylheptadecan-1-ol + 2 NADP(+) + CoA. The catalysed reaction is 18-methylnonadecanoyl-CoA + 2 NADPH + 2 H(+) = 18-methylnonadecan-1-ol + 2 NADP(+) + CoA. Its function is as follows. Catalyzes the reduction of saturated and unsaturated C16 or C18 fatty acyl-CoA to fatty alcohols. It plays an essential role in the production of ether lipids/plasmalogens which synthesis requires fatty alcohols. In parallel, it is also required for wax monoesters production since fatty alcohols also constitute a substrate for their synthesis. The sequence is that of Fatty acyl-CoA reductase 1 from Gallus gallus (Chicken).